The chain runs to 626 residues: Phosphomethylpyrimidine synthase (626 aa).

Substrate-binding positions include Asn237, Met266, Tyr295, His331, 351 to 353, 392 to 395, and Glu431; these read SRG and DGLR. His435 is a Zn(2+) binding site. Position 458 (Tyr458) interacts with substrate. His499 is a Zn(2+) binding site. 3 residues coordinate [4Fe-4S] cluster: Cys579, Cys582, and Cys587.

It belongs to the ThiC family. In terms of assembly, homodimer. It depends on [4Fe-4S] cluster as a cofactor.

The catalysed reaction is 5-amino-1-(5-phospho-beta-D-ribosyl)imidazole + S-adenosyl-L-methionine = 4-amino-2-methyl-5-(phosphooxymethyl)pyrimidine + CO + 5'-deoxyadenosine + formate + L-methionine + 3 H(+). The protein operates within cofactor biosynthesis; thiamine diphosphate biosynthesis. Catalyzes the synthesis of the hydroxymethylpyrimidine phosphate (HMP-P) moiety of thiamine from aminoimidazole ribotide (AIR) in a radical S-adenosyl-L-methionine (SAM)-dependent reaction. This chain is Phosphomethylpyrimidine synthase, found in Cupriavidus necator (strain ATCC 17699 / DSM 428 / KCTC 22496 / NCIMB 10442 / H16 / Stanier 337) (Ralstonia eutropha).